The following is a 252-amino-acid chain: Triosephosphate isomerase (252 aa).

9 to 11 (NWK) lines the substrate pocket. The active-site Electrophile is histidine 100. The Proton acceptor role is filled by glutamate 171. Substrate is bound by residues glycine 177, serine 216, and 237-238 (GG).

Belongs to the triosephosphate isomerase family. Homodimer.

It localises to the cytoplasm. The catalysed reaction is D-glyceraldehyde 3-phosphate = dihydroxyacetone phosphate. The protein operates within carbohydrate biosynthesis; gluconeogenesis. It functions in the pathway carbohydrate degradation; glycolysis; D-glyceraldehyde 3-phosphate from glycerone phosphate: step 1/1. Involved in the gluconeogenesis. Catalyzes stereospecifically the conversion of dihydroxyacetone phosphate (DHAP) to D-glyceraldehyde-3-phosphate (G3P). The protein is Triosephosphate isomerase of Polynucleobacter asymbioticus (strain DSM 18221 / CIP 109841 / QLW-P1DMWA-1) (Polynucleobacter necessarius subsp. asymbioticus).